The following is a 777-amino-acid chain: Hepatocyte growth factor-regulated tyrosine kinase substrate (777 aa).

A VHS domain is found at 15 to 143 (ATSQLLLETD…IMKVEGHVFP (129 aa)). Residues 160–220 (WVDAEECHRC…VCEPCFEQLN (61 aa)) form an FYVE-type zinc finger. Residues Cys-166, Cys-169, Cys-182, Cys-185, Cys-190, and Cys-193 each contribute to the Zn(2+) site. Lys-207 carries the N6-acetyllysine modification. 2 residues coordinate Zn(2+): Cys-212 and Cys-215. Positions 223-319 (AEGKAASTTE…SPVNSSAPLA (97 aa)) are disordered. Residues 225–541 (GKAASTTELP…QRLQEQEKER (317 aa)) are interaction with SNX1. Residues 258–277 (QEEEELQLALALSQSEAEEK) enclose the UIM domain. The segment covering 292–311 (AEPTPVASSAPPASSLYSSP) has biased composition (low complexity). A phosphotyrosine mark is found at Tyr-308, Tyr-329, and Tyr-334. The tract at residues 338 to 370 (KQEEARKSPTPSAPVPLTEPTAQPGEGHAIPAN) is disordered. Residues 443–541 (SINTMHPQLL…QRLQEQEKER (99 aa)) form an interaction with SNAP25 and TRAK2 region. The interaction with STAM stretch occupies residues 452 to 570 (LELLNQLDER…FSLPYAQLQA (119 aa)). Residues 478–777 (ARGALSALRE…GSEAQLISFD (300 aa)) are interaction with NF2. Lys-549 is subject to N6-succinyllysine. Positions 645 to 658 (AAAQGPAGPTTSPA) are enriched in low complexity. Disordered stretches follow at residues 645 to 698 (AAAQ…YMGS) and 712 to 777 (NLMP…ISFD). 2 stretches are compositionally biased toward polar residues: residues 659-698 (YSSYQPTPTQGYQTVASQAPQSLPAISQPPQSGTMGYMGS) and 730-739 (PYISGQQPVY). Low complexity predominate over residues 753-777 (PPVAQQPPAQGPPAQGSEAQLISFD).

In terms of assembly, component of the ESCRT-0 complex composed of STAM or STAM2 and HGS. Part of a complex at least composed of HSG, STAM2 (or probably STAM) and EPS15. Interacts with STAM. Interacts with STAM2. Interacts with EPS15; the interaction is direct, calcium-dependent and inhibited by SNAP25. Identified in a complex with STAM and LITAF. Found in a complex with STAM and E3 ligase ITCH and DTX3L. Interacts with E3 ligase DTX3L; the interaction brings together STAM and HSG, promotes their recruitment to early endosomes and decreases STAM and HGS ubiquitination by ITCH. Interacts with NF2; the interaction is direct. Interacts with ubiquitin; the interaction is direct. Interacts with VPS37C. Interacts with SMAD1, SMAD2 and SMAD3. Interacts with TSG101; the interaction mediates the association with the ESCRT-I complex. Interacts with SNAP25; the interaction is direct and decreases with addition of increasing concentrations of free calcium. Interacts with SNX1; the interaction is direct. Component of a 550 kDa membrane complex at least composed of HGS and SNX1 but excluding EGFR. Interacts with TRAK1. Interacts with TRAK2. Component of the CART complex, at least composed of ACTN4, HGS/HRS, MYO5B and TRIM3. Interacts (via UIM domain) with UBQLN1 (via ubiquitin-like domain). Interacts with ARRDC3. Identified in a complex containing at least ARRDC4, AVPR2 and HGS. Interacts with LAPTM4B; promotes HGS ubiquitination. Post-translationally, phosphorylated on Tyr-334. A minor site of phosphorylation on Tyr-329 is detected. Phosphorylation occurs in response to EGF, IL-2, GM-CSF and HGF. Ubiquitinated by ITCH.

The protein localises to the cytoplasm. The protein resides in the early endosome membrane. Its subcellular location is the endosome. It is found in the multivesicular body membrane. Functionally, involved in intracellular signal transduction mediated by cytokines and growth factors. When associated with STAM it suppresses DNA signaling upon stimulation by IL-2 and GM-CSF. Could be a direct effector of PI3-kinase in vesicular pathway via early endosomes and may regulate trafficking to early and late endosomes by recruiting clathrin. May concentrate ubiquitinated receptors within clathrin-coated regions. Involved in down-regulation of receptor tyrosine kinase via multivesicular body (MVBs) when complexed with STAM (ESCRT-0 complex). The ESCRT-0 complex binds ubiquitin and acts as a sorting machinery that recognizes ubiquitinated receptors and transfers them to further sequential lysosomal sorting/trafficking processes. May contribute to the efficient recruitment of SMADs to the activin receptor complex. Involved in receptor recycling via its association with the CART complex, a multiprotein complex required for efficient transferrin receptor recycling but not for EGFR degradation. This chain is Hepatocyte growth factor-regulated tyrosine kinase substrate (HGS), found in Bos taurus (Bovine).